We begin with the raw amino-acid sequence, 485 residues long: NADH-quinone oxidoreductase subunit N (485 aa).

A run of 14 helical transmembrane segments spans residues 8-28 (LIALLPLLIVGLTVVVVMLSI), 35-55 (FLNATLSVIGLNAALVSLWFV), 71-91 (GFAMLYTGLVLLASLATCTFA), 105-125 (FYLLVLIAALGGILLANANHL), 127-147 (SLFLGIELISLPLFGLVGYAF), 159-179 (YTILSAAASSFLLFGMALVYA), 203-223 (LLAGFGLMIVGLGFKLSLVPF), 235-255 (PAPVSTFLATASKIAIFGVVM), 271-291 (VVLAIIAFASIIFGNLMALSQ), 297-317 (LLGYSSISHLGYLLVALIALQ), 326-346 (VGVYLVGYLFSSLGAFGVVSL), 373-393 (AAVMTVMMLSLAGIPMTLGFI), 408-430 (WWLVGAVVVGSAIGLYYYLRVAV), and 455-475 (IVVLISALLVLVLGVWPQPLI).

It belongs to the complex I subunit 2 family. As to quaternary structure, NDH-1 is composed of 13 different subunits. Subunits NuoA, H, J, K, L, M, N constitute the membrane sector of the complex.

The protein localises to the cell inner membrane. It catalyses the reaction a quinone + NADH + 5 H(+)(in) = a quinol + NAD(+) + 4 H(+)(out). In terms of biological role, NDH-1 shuttles electrons from NADH, via FMN and iron-sulfur (Fe-S) centers, to quinones in the respiratory chain. The immediate electron acceptor for the enzyme in this species is believed to be ubiquinone. Couples the redox reaction to proton translocation (for every two electrons transferred, four hydrogen ions are translocated across the cytoplasmic membrane), and thus conserves the redox energy in a proton gradient. The protein is NADH-quinone oxidoreductase subunit N of Escherichia coli O1:K1 / APEC.